We begin with the raw amino-acid sequence, 229 residues long: N-acetyltransferase MPR1 (229 aa).

An N-acetyltransferase domain is found at phenylalanine 65 to threonine 219. Asparagine 135 contacts substrate. A CoA-binding site is contributed by arginine 145–glycine 150. Asparagine 172–leucine 173 serves as a coordination point for substrate.

Belongs to the acetyltransferase family. In terms of assembly, homodimer. In terms of processing, not glycosylated.

The protein localises to the cytoplasm. Its subcellular location is the mitochondrion. It catalyses the reaction L-glutamate 5-semialdehyde + acetyl-CoA = N-acetyl-L-glutamate 5-semialdehyde + CoA + H(+). In terms of biological role, N-acetyltransferase involved in oxidative stress resistance. Acetylates the toxic proline metabolism intermediate (S)-1-pyrroline-5-carboxylate (P5C), or more likely its spontaneously forming tautomer glutamate-5-semialdehyde (GSA) into N-acetyl-GSA for arginine synthesis in the mitochondria. P5C has been shown to increase the levels of reactive oxygen species (ROS) in the cell by inhibiting the function of the respiratory chain in the mitochondria. The enzyme is able to reduce intracellular ROS levels under P5C-induced oxidative stress and protects cells from damage by oxidative stress. Also acetylates and thereby detoxifies the proline analog azetidine-2-carboxylate (AZC), however it is unlikely that AZC is a natural substrate as it occurs only in plants belonging to the Lilaceae family. Does not acetylate proline. The chain is N-acetyltransferase MPR1 from Saccharomyces cerevisiae (Baker's yeast).